Consider the following 513-residue polypeptide: Protein CYCLOPS (513 aa).

Disordered regions lie at residues 329-380 (QGRT…STQN) and 395-435 (DDRK…AEAK). A compositionally biased stretch (low complexity) spans 333-347 (ASGEPSQSESSAAAP). Residues 359 to 380 (PSNSNQTLGDSSWKQVGESTQN) are compositionally biased toward polar residues. Short sequence motifs (nuclear localization signal) lie at residues 397–400 (RKRK) and 421–424 (KKRR). The stretch at 447 to 513 (MQAILKRCEN…ERILSETGKI (67 aa)) forms a coiled coil.

The protein belongs to the CYCLOPS family. Forms homodimers. Interacts with CCAMK. Highly expressed in roots. Expressed in root hairs and nodules. Not detected in leaves or flowers.

It is found in the nucleus. Involved symbiotic signaling. Required for root infection by symbiotic rhizobia, infection thread (IT) formation, and nodule development. Required for proper induction of early nodulin gene expression. Probably not involved in nodule organogenesis. Involved in arbuscular mycorrhizal (AM) symbiosis. Required for fungal infection of the outer cortical cell layers, and for arbuscule development during the AM symbiosis. Acts downstream of CCAMK. Required for symbiosome formation (i.e. the release of the bacteria from the ITs) and subsequent symbiosome development. Required for the expression of the nodule-specific RPG gene, which controls proper IT growth and is essential for symbiosome formation. Acts upstream of ERN1, a transcriptional regulator required for nodulation. The chain is Protein CYCLOPS from Medicago truncatula (Barrel medic).